The sequence spans 521 residues: Cholesterol side-chain cleavage enzyme, mitochondrial (521 aa).

The transit peptide at 1 to 39 (MLAKGLPPRSVLVKGCQTFLSAPREGLGRLRVPTGEGAG) directs the protein to the mitochondrion. Residue Cys462 coordinates heme.

This sequence belongs to the cytochrome P450 family. Interacts with FDX1/adrenodoxin. It depends on heme as a cofactor.

The protein localises to the mitochondrion inner membrane. It carries out the reaction 6 reduced [adrenodoxin] + cholesterol + 3 O2 + 6 H(+) = 4-methylpentanal + pregnenolone + 6 oxidized [adrenodoxin] + 4 H2O. The enzyme catalyses 2 reduced [adrenodoxin] + cholesterol + O2 + 2 H(+) = (22R)-hydroxycholesterol + 2 oxidized [adrenodoxin] + H2O. The catalysed reaction is (22R)-hydroxycholesterol + 2 reduced [adrenodoxin] + O2 + 2 H(+) = (20R,22R)-20,22-dihydroxycholesterol + 2 oxidized [adrenodoxin] + H2O. It catalyses the reaction (20R,22R)-20,22-dihydroxycholesterol + 2 reduced [adrenodoxin] + O2 + 2 H(+) = 4-methylpentanal + pregnenolone + 2 oxidized [adrenodoxin] + 2 H2O. It functions in the pathway lipid metabolism; C21-steroid hormone metabolism. The protein operates within steroid metabolism; cholesterol metabolism. Its function is as follows. A cytochrome P450 monooxygenase that catalyzes the side-chain hydroxylation and cleavage of cholesterol to pregnenolone, the precursor of most steroid hormones. Catalyzes three sequential oxidation reactions of cholesterol, namely the hydroxylation at C22 followed with the hydroxylation at C20 to yield 20R,22R-hydroxycholesterol that is further cleaved between C20 and C22 to yield the C21-steroid pregnenolone and 4-methylpentanal. Mechanistically, uses molecular oxygen inserting one oxygen atom into a substrate and reducing the second into a water molecule. Two electrons are provided by NADPH via a two-protein mitochondrial transfer system comprising flavoprotein FDXR (adrenodoxin/ferredoxin reductase) and nonheme iron-sulfur protein FDX1 or FDX2 (adrenodoxin/ferredoxin). This Homo sapiens (Human) protein is Cholesterol side-chain cleavage enzyme, mitochondrial.